Reading from the N-terminus, the 231-residue chain is NADH-ubiquinone oxidoreductase chain 4 (231 aa).

6 helical membrane-spanning segments follow: residues 1–21 (PIAGSMVLAAILLKLGGYGII), 34–54 (LFLPFIVLALWGAILANLTCL), 63–85 (IAYSSISHMGLVVAAIIIQTPWG), 89–111 (AMALMIAHGFTSSALFCLANMTY), 124–146 (GLHNTLPMATTWWLMTNLMNIAI), and 169–189 (TIIILGLSMLITASYSLHMFL).

This sequence belongs to the complex I subunit 4 family.

The protein resides in the mitochondrion membrane. The enzyme catalyses a ubiquinone + NADH + 5 H(+)(in) = a ubiquinol + NAD(+) + 4 H(+)(out). Core subunit of the mitochondrial membrane respiratory chain NADH dehydrogenase (Complex I) that is believed to belong to the minimal assembly required for catalysis. Complex I functions in the transfer of electrons from NADH to the respiratory chain. The immediate electron acceptor for the enzyme is believed to be ubiquinone. The protein is NADH-ubiquinone oxidoreductase chain 4 (MT-ND4) of Crotalus lepidus (Banded rock rattlesnake).